We begin with the raw amino-acid sequence, 1235 residues long: Structural maintenance of chromosomes protein 1B (1235 aa).

32–39 (GPNGSGKS) contacts ATP. Residues 156-490 (EEISTSGELI…RSELQNAGID (335 aa)) are a coiled coil. The SMC hinge domain occupies 514–629 (SVFGRLFDLC…ETMEEARHIA (116 aa)). N6-acetyllysine is present on residues Lys648 and Lys713. Coiled coils occupy residues 666 to 934 (WDEK…LDCK), 970 to 994 (EKEE…SDQE), and 1022 to 1049 (RALE…KEAR). Position 1033 is an N6-acetyllysine (Lys1033).

It belongs to the SMC family. SMC1 subfamily. Forms a heterodimer with SMC3. Component of a meiosis-specific cohesin complex, probably composed of the SMC1B and SMC3 heterodimer attached via their SMC hinge domain, RAD21 (or its meiosis-specific related protein REC8), which link them, and STAG3, which interacts with RAD21 or REC8. The cohesin complex interacts with the cohesin loading complex subunits NIPBL/Scc2 (via HEAT repeats) and MAU2/Scc4. NIPBL directly contacts all members of the complex, RAD21, SMC1A/B, SMC3 and STAG1.

Its subcellular location is the nucleus. The protein resides in the chromosome. It localises to the centromere. Functionally, meiosis-specific component of cohesin complex. Required for the maintenance of meiotic cohesion, but not, or only to a minor extent, for its establishment. Contributes to axial element (AE) formation and the organization of chromatin loops along the AE. Plays a key role in synapsis, recombination and chromosome movements. The cohesin complex is required for the cohesion of sister chromatids after DNA replication. The cohesin complex apparently forms a large proteinaceous ring within which sister chromatids can be trapped. At anaphase, the complex is cleaved and dissociates from chromatin, allowing sister chromatids to segregate. The meiosis-specific cohesin complex probably replaces mitosis specific cohesin complex when it dissociates from chromatin during prophase I. This Homo sapiens (Human) protein is Structural maintenance of chromosomes protein 1B (SMC1B).